A 358-amino-acid chain; its full sequence is Tyrosinase ustQ (358 aa).

A glycan (N-linked (GlcNAc...) asparagine) is linked at N28. Residues 37–57 (FVPVYAGLTIISLITVTVSLV) form a helical membrane-spanning segment. Residues N91 and N109 are each glycosylated (N-linked (GlcNAc...) asparagine). 2 residues coordinate Cu cation: H128 and H137. N-linked (GlcNAc...) asparagine glycans are attached at residues N172 and N214. 3 residues coordinate Cu cation: H266, H270, and H292. N-linked (GlcNAc...) asparagine glycosylation is found at N321 and N325.

This sequence belongs to the tyrosinase family. It depends on Cu(2+) as a cofactor.

It localises to the membrane. The enzyme catalyses 2 L-dopa + O2 = 2 L-dopaquinone + 2 H2O. It catalyses the reaction L-tyrosine + O2 = L-dopaquinone + H2O. It participates in mycotoxin biosynthesis. In terms of biological role, tyrosinase; part of the gene cluster that mediates the biosynthesis of the secondary metabolite ustiloxin B, an antimitotic tetrapeptide. First, ustA is processed by the subtilisin-like endoprotease Kex2 that is outside the ustiloxin B gene cluster, at the C-terminal side of Arg-Lys, after transfer to Golgi apparatus through the endoplasmic reticulum (ER). Cleavage by KEX2 generates 16 peptides YAIG-I to YAIG-XVI. To process the precursor peptide further, at least two peptidases are necessary to cleave the N-terminal and C-terminal sides of the Tyr-Ala-Ile-Gly core peptide which serves as backbone for the synthesis of ustiloxin B, through cyclization and modification of the tyrosine with a non-protein coding amino acid, norvaline. One of the two peptidases must be the serine peptidase ustP; and the other pepdidase is probably ustH. Macrocyclization of the core peptide derived from ustA requires the tyrosinase ustQ, as well as the homologous oxidases ustYa and ustYb, and leads to the production of the first cyclization product N-desmethylustiloxin F. For the formation of N-desmethylustiloxin F, three oxidation steps are required, hydroxylation at the benzylic position, hydroxylation at either the aromatic ring of Tyr or beta-position of Ile, and oxidative cyclization. UstQ may catalyze the oxidation of a phenol moiety, whereas the ustYa and ustYb are most likely responsible for the remaining two-step oxidations. N-desmethylustiloxin F is then methylated by ustM to yield ustiloxin F which in turn substrate of the cytochrome P450 monooxygenase ustC which catalyzes the formation of S-deoxyustiloxin H. The flavoprotein monooxygenases ustF1 and ustF2 then participate in the modification of the side chain of S-deoxyustiloxin H, leading to the synthesis of an oxime intermediate, via ustiloxin H. Finally, carboxylative dehydration performed by the cysteine desulfurase-like protein ustD yields ustiloxin B. This Aspergillus flavus (strain ATCC 200026 / FGSC A1120 / IAM 13836 / NRRL 3357 / JCM 12722 / SRRC 167) protein is Tyrosinase ustQ.